The chain runs to 440 residues: Phosphatidylcholine-sterol acyltransferase (440 aa).

Positions 1 to 24 are cleaved as a signal peptide; the sequence is MGPPGSPWQWVTLLLGLLLPPAAP. Residue Asn-44 is glycosylated (N-linked (GlcNAc...) (complex) asparagine). Cys-74 and Cys-98 form a disulfide bridge. Residue Asn-108 is glycosylated (N-linked (GlcNAc...) (complex) asparagine). The active-site Nucleophile is the Ser-205. The N-linked (GlcNAc...) (complex) asparagine glycan is linked to Asn-296. Cys-337 and Cys-380 form a disulfide bridge. Residues Asp-369 and His-401 each act as charge relay system in the active site. An N-linked (GlcNAc...) (complex) asparagine glycan is attached at Asn-408. The O-linked (GalNAc...) threonine glycan is linked to Thr-431. Ser-433 is a glycosylation site (O-linked (GalNAc...) serine).

This sequence belongs to the AB hydrolase superfamily. Lipase family. O- and N-glycosylated. O-glycosylation on Thr-431 and Ser-433 consists of sialylated galactose beta 1--&gt;3N-acetylgalactosamine structures. N-glycosylated sites contain sialylated triantennary and/or biantennary complex structures. Detected in blood plasma. Detected in cerebral spinal fluid (at protein level). Detected in liver. Expressed mainly in brain, liver and testes.

The protein localises to the secreted. The enzyme catalyses a sterol + a 1,2-diacyl-sn-glycero-3-phosphocholine = a sterol ester + a 1-acyl-sn-glycero-3-phosphocholine. It carries out the reaction a 1-O-alkyl-2-acetyl-sn-glycero-3-phosphocholine + H2O = a 1-O-alkyl-sn-glycero-3-phosphocholine + acetate + H(+). It catalyses the reaction a 1-hexadecanoyl-2-acyl-sn-glycero-3-phosphocholine + (24S)-hydroxycholesterol = (24S)-24-hydroxycholesterol ester + 1-hexadecanoyl-sn-glycero-3-phosphocholine. The catalysed reaction is (24S)-hydroxycholesterol + 1-hexadecanoyl-2-(9Z,12Z-octadecadienoyl)-sn-glycero-3-phosphocholine = (24S)-hydroxycholesterol 3-linoleoate + 1-hexadecanoyl-sn-glycero-3-phosphocholine. The enzyme catalyses 1-hexadecanoyl-2-(5Z,8Z,11Z,14Z-eicosatetraenoyl)-sn-glycero-3-phosphocholine + cholesterol = cholesteryl (5Z,8Z,11Z,14Z)-eicosatetraenoate + 1-hexadecanoyl-sn-glycero-3-phosphocholine. It carries out the reaction 1-hexadecanoyl-2-(9Z-octadecenoyl)-sn-glycero-3-phosphocholine + cholesterol = cholesteryl (9Z-octadecenoate) + 1-hexadecanoyl-sn-glycero-3-phosphocholine. It catalyses the reaction 1-hexadecanoyl-2-(8Z,11Z,14Z-eicosatrienoyl)-sn-glycero-3-phosphocholine + cholesterol = cholesteryl (8Z,11Z,14Z)-eicosatrienoate + 1-hexadecanoyl-sn-glycero-3-phosphocholine. The catalysed reaction is 1-hexadecanoyl-2-(5Z,8Z,11Z-eicosatrienoyl)-sn-glycero-3-phosphocholine + cholesterol = cholesteryl (5Z,8Z,11Z)-eicosatrienoate + 1-hexadecanoyl-sn-glycero-3-phosphocholine. The enzyme catalyses 1-hexadecanoyl-2-(5Z,8Z,11Z,14Z,17Z-eicosapentaenoyl)-sn-glycero-3-phosphocholine + cholesterol = (5Z,8Z,11Z,14Z,17Z-eicosapentaenoyl)-cholesterol + 1-hexadecanoyl-sn-glycero-3-phosphocholine. It carries out the reaction 1-hexadecanoyl-2-(9Z,12Z-octadecadienoyl)-sn-glycero-3-phosphocholine + cholesterol = cholesteryl (9Z,12Z)-octadecadienoate + 1-hexadecanoyl-sn-glycero-3-phosphocholine. It catalyses the reaction 1-hexadecanoyl-2-(6Z,9Z,12Z-octadecatrienoyl)-sn-glycero-3-phosphocholine + cholesterol = (6Z,9Z,12Z-octadecatrienoyl)-cholesterol + 1-hexadecanoyl-sn-glycero-3-phosphocholine. The catalysed reaction is 1-hexadecanoyl-2-(11Z,14Z,17Z-eicosatrienoyl)-sn-glycero-3-phosphocholine + cholesterol = (11Z,14Z,17Z-eicosatrienoyl)-cholesterol + 1-hexadecanoyl-sn-glycero-3-phosphocholine. The enzyme catalyses 1-hexadecanoyl-2-(9Z,12Z,15Z-octadecatrienoyl)-sn-glycero-3-phosphocholine + cholesterol = (9Z,12Z,15Z-octadecatrienoyl)-cholesterol + 1-hexadecanoyl-sn-glycero-3-phosphocholine. It carries out the reaction 1-hexadecanoyl-2-(9Z,12Z-octadecadienoyl)-sn-glycero-3-phosphocholine + H2O = (9Z,12Z)-octadecadienoate + 1-hexadecanoyl-sn-glycero-3-phosphocholine + H(+). It catalyses the reaction 1-hexadecanoyl-2-(5Z,8Z,11Z,14Z-eicosatetraenoyl)-sn-glycero-3-phosphocholine + H2O = 1-hexadecanoyl-sn-glycero-3-phosphocholine + (5Z,8Z,11Z,14Z)-eicosatetraenoate + H(+). The catalysed reaction is a 1-O-alkyl-2-acetyl-sn-glycero-3-phosphocholine + 1-hexadecanoyl-sn-glycero-3-phosphocholine = 1-hexadecanoyl-2-acetyl-sn-glycero-3-phosphocholine + a 1-O-alkyl-sn-glycero-3-phosphocholine. Its activity is regulated as follows. APOA1 is the most potent activator in plasma. Also activated by APOE, APOC1 and APOA4. Inhibited by haptoglobin and 5,5'-dithiobis-(2-nitrobenzoic acid) (DTNB). In terms of biological role, central enzyme in the extracellular metabolism of plasma lipoproteins. Synthesized mainly in the liver and secreted into plasma where it converts cholesterol and phosphatidylcholines (lecithins) to cholesteryl esters and lysophosphatidylcholines on the surface of high and low density lipoproteins (HDLs and LDLs). The cholesterol ester is then transported back to the liver. Has a preference for plasma 16:0-18:2 or 18:O-18:2 phosphatidylcholines. Also produced in the brain by primary astrocytes, and esterifies free cholesterol on nascent APOE-containing lipoproteins secreted from glia and influences cerebral spinal fluid (CSF) APOE- and APOA1 levels. Together with APOE and the cholesterol transporter ABCA1, plays a key role in the maturation of glial-derived, nascent lipoproteins. Required for remodeling high-density lipoprotein particles into their spherical forms. Catalyzes the hydrolysis of 1-O-alkyl-2-acetyl-sn-glycero-3-phosphocholine (platelet-activating factor or PAF) to 1-O-alkyl-sn-glycero-3-phosphocholine (lyso-PAF). Also catalyzes the transfer of the acetate group from PAF to 1-hexadecanoyl-sn-glycero-3-phosphocholine forming lyso-PAF. Catalyzes the esterification of (24S)-hydroxycholesterol (24(S)OH-C), also known as cerebrosterol to produce 24(S)OH-C monoesters. The polypeptide is Phosphatidylcholine-sterol acyltransferase (LCAT) (Homo sapiens (Human)).